The chain runs to 186 residues: UPF0149 protein Pfl01_5435 (186 aa).

This sequence belongs to the UPF0149 family.

This is UPF0149 protein Pfl01_5435 from Pseudomonas fluorescens (strain Pf0-1).